The primary structure comprises 480 residues: Membrane-bound lytic murein transglycosylase F (480 aa).

The first 15 residues, 1-15, serve as a signal peptide directing secretion; sequence MNRILLTLLTLTLLA. The interval 16–259 is non-LT domain; that stretch reads GCQRVAVEET…HLDEKYFAHV (244 aa). The LT domain stretch occupies residues 260 to 480; it reads KRFDYVDTRA…EKAITGAQPE (221 aa). Glu-304 is a catalytic residue.

The protein in the N-terminal section; belongs to the bacterial solute-binding protein 3 family. This sequence in the C-terminal section; belongs to the transglycosylase Slt family.

Its subcellular location is the cell outer membrane. It carries out the reaction Exolytic cleavage of the (1-&gt;4)-beta-glycosidic linkage between N-acetylmuramic acid (MurNAc) and N-acetylglucosamine (GlcNAc) residues in peptidoglycan, from either the reducing or the non-reducing ends of the peptidoglycan chains, with concomitant formation of a 1,6-anhydrobond in the MurNAc residue.. In terms of biological role, murein-degrading enzyme that degrades murein glycan strands and insoluble, high-molecular weight murein sacculi, with the concomitant formation of a 1,6-anhydromuramoyl product. Lytic transglycosylases (LTs) play an integral role in the metabolism of the peptidoglycan (PG) sacculus. Their lytic action creates space within the PG sacculus to allow for its expansion as well as for the insertion of various structures such as secretion systems and flagella. In Shewanella woodyi (strain ATCC 51908 / MS32), this protein is Membrane-bound lytic murein transglycosylase F.